We begin with the raw amino-acid sequence, 88 residues long: Small ribosomal subunit protein uS15c (88 aa).

The protein belongs to the universal ribosomal protein uS15 family. In terms of assembly, part of the 30S ribosomal subunit.

It localises to the plastid. Its subcellular location is the chloroplast. The protein is Small ribosomal subunit protein uS15c (rps15) of Draba nemorosa (Woodland whitlowgrass).